A 460-amino-acid polypeptide reads, in one-letter code: Chromosomal replication initiator protein DnaA (460 aa).

The interval 1 to 84 (MAVSLWQQCI…RFDIGSRPSA (84 aa)) is domain I, interacts with DnaA modulators. The segment at 84-123 (AKKPEPAPVAAVRVPNPQTKASVGTSFNTTEPVVNANHRS) is domain II. The segment at 124–340 (NINPTYQFDN…GALNRVIANA (217 aa)) is domain III, AAA+ region. Residues G168, G170, K171, and T172 each contribute to the ATP site. The segment at 341–460 (NFTGRPITID…YANLIRTLSS (120 aa)) is domain IV, binds dsDNA.

It belongs to the DnaA family. As to quaternary structure, oligomerizes as a right-handed, spiral filament on DNA at oriC.

The protein resides in the cytoplasm. Its function is as follows. Plays an essential role in the initiation and regulation of chromosomal replication. ATP-DnaA binds to the origin of replication (oriC) to initiate formation of the DNA replication initiation complex once per cell cycle. Binds the DnaA box (a 9 base pair repeat at the origin) and separates the double-stranded (ds)DNA. Forms a right-handed helical filament on oriC DNA; dsDNA binds to the exterior of the filament while single-stranded (ss)DNA is stabiized in the filament's interior. The ATP-DnaA-oriC complex binds and stabilizes one strand of the AT-rich DNA unwinding element (DUE), permitting loading of DNA polymerase. After initiation quickly degrades to an ADP-DnaA complex that is not apt for DNA replication. Binds acidic phospholipids. The polypeptide is Chromosomal replication initiator protein DnaA (Shewanella sp. (strain MR-7)).